Consider the following 429-residue polypeptide: Ribonuclease E/G-like protein (429 aa).

The Mg(2+) site is built by aspartate 290 and aspartate 332.

This sequence belongs to the RNase E/G family. Mg(2+) is required as a cofactor.

Its subcellular location is the plastid. It localises to the chloroplast stroma. Its function is as follows. Involved in intercistronic processing of primary transcripts from chloroplast operons. The endonucleolytic activity of the enzyme depends on the number of phosphates at the 5' end, is inhibited by structured RNA, and preferentially cleaves A/U-rich sequences. The polypeptide is Ribonuclease E/G-like protein (rne) (Guillardia theta (Cryptophyte)).